A 588-amino-acid polypeptide reads, in one-letter code: MTDSTKQKGLEWQKQGLSDNERLKAESNFLRGTILDDLEDGLTGGFKGDNFQMIRFHGMYEQDDRDIRAERADEKLEARKFMLLRCRLPGGIIKPAQWIEIDKFARDNNYYQSIRLTNRQTFQYHGVPKTKLQEMHRLLHKLGLDSIATASDMNRNVLCSSNPVESELHQEAYEWAKKISEHLLPRTNGYLDVWIAGKKVQSSDSFLGQEDEPILGKTYLPRKYKTAVVLPPLNDVDMYGNDMNFVGIQDEAGKLVGFNVLVGGGLSFEHGNTKTYPNVALELGYIPVEQTLKAAECIVTTQRDFGNRADRKNARLRYTLQNMTLDGFREEVERRMGFKFESIRPFEFTERGDRIGWVKGIDDKWHLTCFIESGRITDKPGKPLMTGMLELAKVHTGDFRITANQNIIIANVAEEDKQRIEDIAREYGLIGNISKLRENSMSCVSFPTCPLAMAESERALPEFIDELDNIMAKHDVADDYIVTRITGCPNGCGRAMLAEIGLVGKAIGRYNLHLGGDRPGTRIPRMYKENITLPEILAELDGLIGRWAKERNSNEGFGDFVIRAGIIKPVVNAVVDFWDANLIPTVTA.

[4Fe-4S] cluster contacts are provided by Cys-443, Cys-449, Cys-488, and Cys-492. Residue Cys-492 coordinates siroheme.

It belongs to the nitrite and sulfite reductase 4Fe-4S domain family. Alpha(8)-beta(8). The alpha component is a flavoprotein, the beta component is a hemoprotein. The cofactor is siroheme. [4Fe-4S] cluster is required as a cofactor.

The enzyme catalyses hydrogen sulfide + 3 NADP(+) + 3 H2O = sulfite + 3 NADPH + 4 H(+). It functions in the pathway sulfur metabolism; hydrogen sulfide biosynthesis; hydrogen sulfide from sulfite (NADPH route): step 1/1. Functionally, component of the sulfite reductase complex that catalyzes the 6-electron reduction of sulfite to sulfide. This is one of several activities required for the biosynthesis of L-cysteine from sulfate. The protein is Sulfite reductase [NADPH] hemoprotein beta-component of Actinobacillus succinogenes (strain ATCC 55618 / DSM 22257 / CCUG 43843 / 130Z).